We begin with the raw amino-acid sequence, 734 residues long: 5-methyltetrahydropteroyltriglutamate--homocysteine methyltransferase (734 aa).

5-methyltetrahydropteroyltri-L-glutamate-binding positions include 15–18 (REFK) and Lys104. Residues 409–411 (IGS) and Glu462 each bind L-homocysteine. Residues 409 to 411 (IGS) and Glu462 contribute to the L-methionine site. 5-methyltetrahydropteroyltri-L-glutamate-binding positions include 493-494 (RC) and Trp539. Asp577 is an L-homocysteine binding site. L-methionine is bound at residue Asp577. Residue Glu583 participates in 5-methyltetrahydropteroyltri-L-glutamate binding. The Zn(2+) site is built by His618, Cys620, and Glu642. The Proton donor role is filled by His672. Zn(2+) is bound at residue Cys704.

Belongs to the vitamin-B12 independent methionine synthase family. Zn(2+) is required as a cofactor.

It carries out the reaction 5-methyltetrahydropteroyltri-L-glutamate + L-homocysteine = tetrahydropteroyltri-L-glutamate + L-methionine. It functions in the pathway amino-acid biosynthesis; L-methionine biosynthesis via de novo pathway; L-methionine from L-homocysteine (MetE route): step 1/1. Its function is as follows. Catalyzes the transfer of a methyl group from 5-methyltetrahydrofolate to homocysteine resulting in methionine formation. This is 5-methyltetrahydropteroyltriglutamate--homocysteine methyltransferase from Thermotoga maritima (strain ATCC 43589 / DSM 3109 / JCM 10099 / NBRC 100826 / MSB8).